Here is a 354-residue protein sequence, read N- to C-terminus: Lariat debranching enzyme (354 aa).

A divalent metal cation is bound by residues Cys14, His16, and Asp45. The RNA site is built by Lys59, Asn90, His91, Lys134, and His156. A divalent metal cation is bound at residue Asn90. Residues 130 to 158 (SGIYKSFDEKKPYTYPPSPNDVVSLFHTR) form a lariat recognition loop region. An a divalent metal cation-binding site is contributed by His180. 5 residues coordinate RNA: Gly201, Asp205, His230, Met231, and His232. Position 230 (His230) interacts with a divalent metal cation. Residue His232 participates in a divalent metal cation binding.

Belongs to the lariat debranching enzyme family. The cofactor is Fe(2+). Requires Zn(2+) as cofactor. Mn(2+) is required as a cofactor.

It is found in the cytoplasm. It localises to the perinuclear region. Its activity is regulated as follows. Active in presence of diverse metals including Fe(2+), Zn(2+) and Mn(2+). Binds two metal cations in two adjacent alpha and beta metal-binding pockets. The activity is the highest with Fe(2+) bound to the 2 metal-binding sites. The activity is slightly lower with Fe(2+) bound to the beta site and Zn(2+) to the alpha site and decreases further when only Zn(2+) is bound. No activity with Mn(2+). However, another study showed activity with Mn(2+) bound to the beta site and Zn(2+) to the alpha site. Mn(2+) appears unable to bind to the alpha site. Cleaves the 2'-5' phosphodiester linkage at the branch point of excised lariat intron RNA and converts them into linear molecules that can be subsequently degraded, thereby facilitating ribonucleotide turnover. The chain is Lariat debranching enzyme from Entamoeba histolytica (strain ATCC 30459 / HM-1:IMSS / ABRM).